The sequence spans 419 residues: BTB/POZ domain-containing protein KCTD20 (419 aa).

The BTB domain occupies 117 to 191 (EKVTLLVDGT…YKTGIINCPD (75 aa)).

As to quaternary structure, interacts with AKT1; AKT2 and AKT3. Interacts with PPP2CA and PPP1CA. Part of a complex containing MARK4. In terms of tissue distribution, ubiquitously expressed.

It is found in the cytoplasm. Promotes the phosphorylation of AKT family members. The polypeptide is BTB/POZ domain-containing protein KCTD20 (Kctd20) (Mus musculus (Mouse)).